A 528-amino-acid chain; its full sequence is DEAD-box ATP-dependent RNA helicase CshA (528 aa).

The Q motif signature appears at 2-30 (TTFRELGLSDSLLQSVESMGFEEATPIQA). Residues 33 to 203 (IPHALQGKDI…ERFMTEPQHI (171 aa)) enclose the Helicase ATP-binding domain. Residue 46 to 53 (AQTGTGKT) participates in ATP binding. The DEAD box motif lies at 151 to 154 (DEAD). The 161-residue stretch at 214 to 374 (NIQQFYLEVQ…RMDAPTLDEA (161 aa)) folds into the Helicase C-terminal domain. Positions 428–528 (TTPIALTSEP…RKHHSRKPQA (101 aa)) are disordered. Residues 458 to 506 (DGNRNRSRDGRGGDGRNRDRNRDGRNRDGNRDRNREGSRDGNRGRRGEG) are compositionally biased toward basic and acidic residues. The span at 518-528 (ERKHHSRKPQA) shows a compositional bias: basic residues.

It belongs to the DEAD box helicase family. CshA subfamily. In terms of assembly, oligomerizes, may be a member of the RNA degradosome.

It is found in the cytoplasm. The enzyme catalyses ATP + H2O = ADP + phosphate + H(+). In terms of biological role, DEAD-box RNA helicase possibly involved in RNA degradation. Unwinds dsRNA in both 5'- and 3'-directions, has RNA-dependent ATPase activity. This Bacillus thuringiensis (strain Al Hakam) protein is DEAD-box ATP-dependent RNA helicase CshA.